The following is an 883-amino-acid chain: Glutamate receptor 2 (883 aa).

Residues 1–21 form the signal peptide; sequence MQKIMHISVLLSPVLWGLIFG. Topologically, residues 22–543 are extracellular; sequence VSSNSIQIGG…GVFSFLDPLA (522 aa). The cysteines at positions 78 and 330 are disulfide-linked. Residues asparagine 256, asparagine 370, asparagine 406, and asparagine 413 are each glycosylated (N-linked (GlcNAc...) asparagine). The L-glutamate site is built by proline 499, threonine 501, and arginine 506. A helical membrane pass occupies residues 544–564; the sequence is YEIWMCIVFAYIGVSVVLFLV. The Cytoplasmic portion of the chain corresponds to 565 to 591; sequence SRFSPYEWHTEEFEDGRETQSSESTNE. The helical; Pore-forming intramembrane region spans 592–607; that stretch reads FGIFNSLWFSLGAFMQ. The stretch at 608-610 is an intramembrane region; it reads QGC. Cysteine 610 carries the S-palmitoyl cysteine lipid modification. At 611–616 the chain is on the cytoplasmic side; the sequence is DISPRS. A helical transmembrane segment spans residues 617–637; sequence LSGRIVGGVWWFFTLIIISSY. Topologically, residues 638–812 are extracellular; it reads TANLAAFLTV…EKTSALSLSN (175 aa). L-glutamate is bound by residues serine 675 and threonine 676. Serine 683 bears the Phosphoserine; by PKC mark. Residue serine 717 is modified to Phosphoserine; by PKG. Position 726 (glutamate 726) interacts with L-glutamate. Cysteine 739 and cysteine 794 form a disulfide bridge. A helical membrane pass occupies residues 813 to 833; it reads VAGVFYILVGGLGLAMLVALI. Topologically, residues 834–883 are cytoplasmic; the sequence is EFCYKSRAEAKRMKVAKNPQNINPSSSQNSQNFATYKEGYNVYGIESVKI. Cysteine 836 carries S-palmitoyl cysteine lipidation. Phosphoserine is present on residues serine 860 and serine 863. The required for interaction with IQSEC1 stretch occupies residues 867-877; the sequence is ATYKEGYNVYG. Tyrosine 876 is subject to Phosphotyrosine. Serine 880 carries the post-translational modification Phosphoserine.

It belongs to the glutamate-gated ion channel (TC 1.A.10.1) family. GRIA2 subfamily. Homotetramer or heterotetramer of pore-forming glutamate receptor subunits. Tetramers may be formed by the dimerization of dimers. May interact with MPP4. Forms a ternary complex with GRIP1 and CSPG4. Interacts with ATAD1 in an ATP-dependent manner. ATAD1-catalyzed ATP hydrolysis disrupts binding to ATAD1 and to GRIP1 and leads to AMPAR complex disassembly. Interacts with GRIP2. Interacts with GRIP1. Interacts with NSF via its C-terminus. Interacts with CACNG2, PICK1 and GRIP2. Interacts with GRIA1 and SYNDIG1. Part of a complex containing GRIA2, NSF and NAPA and/or NAPB. Interacts with SNX27 (via PDZ domain); the interaction is required for recycling to the plasma membrane when endocytosed and prevent degradation in lysosomes. Interacts with LRFN1. Found in a complex with GRIA1, GRIA3, GRIA4, CNIH2, CNIH3, CACNG2, CACNG3, CACNG4, CACNG5, CACNG7 and CACNG8. Interacts with CACNG5. Interacts with OLFM2. Interacts with AP4B1, AP4E1 and AP4M1; probably indirect it mediates the somatodendritic localization of GRIA2 in neurons. Forms a complex with GRIP1, NSG1 and STX12; controls the intracellular fate of AMPAR and the endosomal sorting of the GRIA2 subunit toward recycling and membrane targeting. Interacts with IQSEC1; the interaction is required for ARF6 activation. Interacts (heterotetramer form) with CNIH2 and CNIH3; this interaction promotes expression at the plasma membrane and extensively modulates their gating properties by slowing deactivation and desensitization kinetics. In terms of processing, palmitoylated. Depalmitoylated upon L-glutamate stimulation. Cys-610 palmitoylation leads to Golgi retention and decreased cell surface expression. In contrast, Cys-836 palmitoylation does not affect cell surface expression but regulates stimulation-dependent endocytosis. Post-translationally, phosphorylation at Tyr-876 is required for interaction with IQSEC1 and ARF6 activation, which in turn triggers AMPAR internalization for persistent synaptic depression. Ubiquitinated by RNF167, leading to its degradation. In terms of processing, N-glycosylated. Detected in forebrain. Detected in dendrites of neuronal cells. Expressed in the pyramidal cell layers of CA1 and CA3 and in the granule cell layer of the dentate gyrus.

It is found in the cell membrane. The protein resides in the postsynaptic cell membrane. Its subcellular location is the postsynaptic density membrane. It catalyses the reaction Ca(2+)(in) = Ca(2+)(out). It carries out the reaction Na(+)(in) = Na(+)(out). In terms of biological role, ionotropic glutamate receptor that functions as a ligand-gated cation channel, gated by L-glutamate and glutamatergic agonists such as alpha-amino-3-hydroxy-5-methyl-4-isoxazolepropionic acid (AMPA), quisqualic acid, and kainic acid. L-glutamate acts as an excitatory neurotransmitter at many synapses in the central nervous system and plays an important role in fast excitatory synaptic transmission. Binding of the excitatory neurotransmitter L-glutamate induces a conformation change, leading to the opening of the cation channel, and thereby converts the chemical signal to an electrical impulse upon entry of monovalent and divalent cations such as sodium and calcium. The receptor then desensitizes rapidly and enters in a transient inactive state, characterized by the presence of bound agonist. In the presence of CACNG4 or CACNG7 or CACNG8, shows resensitization which is characterized by a delayed accumulation of current flux upon continued application of L-glutamate. Through complex formation with NSG1, GRIP1 and STX12 controls the intracellular fate of AMPAR and the endosomal sorting of the GRIA2 subunit toward recycling and membrane targeting. The chain is Glutamate receptor 2 from Rattus norvegicus (Rat).